Consider the following 385-residue polypeptide: tRNA pseudouridine synthase D (385 aa).

The active-site Nucleophile is aspartate 65. A TRUD domain is found at 143-345 (GCENYFGEQR…SDGVRKAFFK (203 aa)).

Belongs to the pseudouridine synthase TruD family.

It catalyses the reaction uridine(13) in tRNA = pseudouridine(13) in tRNA. In terms of biological role, responsible for synthesis of pseudouridine from uracil-13 in transfer RNAs. The sequence is that of tRNA pseudouridine synthase D from Aquifex aeolicus (strain VF5).